Consider the following 138-residue polypeptide: Small ribosomal subunit protein uS11c (138 aa).

Positions 1 to 22 (MAKPIPRIGSQRNRRINSRKNA) are disordered. Positions 12-22 (RNRRINSRKNA) are enriched in basic residues.

Belongs to the universal ribosomal protein uS11 family. Part of the 30S ribosomal subunit.

The protein resides in the plastid. It localises to the chloroplast. The polypeptide is Small ribosomal subunit protein uS11c (Fagopyrum esculentum subsp. ancestrale (Wild buckwheat)).